The primary structure comprises 89 residues: Small ribosomal subunit protein uS15 (89 aa).

It belongs to the universal ribosomal protein uS15 family. As to quaternary structure, part of the 30S ribosomal subunit. Forms a bridge to the 50S subunit in the 70S ribosome, contacting the 23S rRNA.

One of the primary rRNA binding proteins, it binds directly to 16S rRNA where it helps nucleate assembly of the platform of the 30S subunit by binding and bridging several RNA helices of the 16S rRNA. Functionally, forms an intersubunit bridge (bridge B4) with the 23S rRNA of the 50S subunit in the ribosome. The protein is Small ribosomal subunit protein uS15 of Cupriavidus metallidurans (strain ATCC 43123 / DSM 2839 / NBRC 102507 / CH34) (Ralstonia metallidurans).